We begin with the raw amino-acid sequence, 83 residues long: UPF0298 protein SERP0712 (83 aa).

This sequence belongs to the UPF0298 family.

The protein resides in the cytoplasm. In Staphylococcus epidermidis (strain ATCC 35984 / DSM 28319 / BCRC 17069 / CCUG 31568 / BM 3577 / RP62A), this protein is UPF0298 protein SERP0712.